We begin with the raw amino-acid sequence, 85 residues long: Large ribosomal subunit protein bL27 (85 aa).

It belongs to the bacterial ribosomal protein bL27 family.

This is Large ribosomal subunit protein bL27 from Cellvibrio japonicus (strain Ueda107) (Pseudomonas fluorescens subsp. cellulosa).